The following is a 666-amino-acid chain: L-aspartate N-monooxygenase (nitrosuccinate-forming) (666 aa).

The segment at 645–666 (LPAYEDPGVRCPSDDRLTEVTA) is disordered. The span at 656-666 (PSDDRLTEVTA) shows a compositional bias: basic and acidic residues.

This sequence belongs to the nitrosuccinic acid synthase family. Requires FAD as cofactor.

It carries out the reaction L-aspartate + 3 NADPH + 3 O2 + 2 H(+) = 2-nitrobutanedioate + 3 NADP(+) + 4 H2O. The protein operates within antibiotic biosynthesis. Part of a gene cluster involved in the biosynthesis of cremeomycin, a light-sensitive o-diazoquinone with antibacterial and antiproliferative effects. Catalyzes the iterative oxidation of L-aspartic acid to nitrosuccinic acid (2-nitrobutanedioate) via N-hydroxyaspartic acid and nitrososuccinic acid. This is L-aspartate N-monooxygenase (nitrosuccinate-forming) from Streptomyces cremeus.